Reading from the N-terminus, the 347-residue chain is Protein RecA (347 aa).

G64 to T71 provides a ligand contact to ATP.

This sequence belongs to the RecA family.

Its subcellular location is the cytoplasm. In terms of biological role, can catalyze the hydrolysis of ATP in the presence of single-stranded DNA, the ATP-dependent uptake of single-stranded DNA by duplex DNA, and the ATP-dependent hybridization of homologous single-stranded DNAs. It interacts with LexA causing its activation and leading to its autocatalytic cleavage. This is Protein RecA from Bartonella quintana (strain Toulouse) (Rochalimaea quintana).